The chain runs to 131 residues: Sec-independent protein translocase protein TatB (131 aa).

Residues phenylalanine 2–glycine 22 traverse the membrane as a helical segment. Composition is skewed to polar residues over residues glutamate 68–isoleucine 83 and alanine 116–glycine 131. The interval glutamate 68–glycine 131 is disordered.

The protein belongs to the TatB family. In terms of assembly, the Tat system comprises two distinct complexes: a TatABC complex, containing multiple copies of TatA, TatB and TatC subunits, and a separate TatA complex, containing only TatA subunits. Substrates initially bind to the TatABC complex, which probably triggers association of the separate TatA complex to form the active translocon.

Its subcellular location is the cell inner membrane. In terms of biological role, part of the twin-arginine translocation (Tat) system that transports large folded proteins containing a characteristic twin-arginine motif in their signal peptide across membranes. Together with TatC, TatB is part of a receptor directly interacting with Tat signal peptides. TatB may form an oligomeric binding site that transiently accommodates folded Tat precursor proteins before their translocation. This is Sec-independent protein translocase protein TatB from Shewanella pealeana (strain ATCC 700345 / ANG-SQ1).